A 541-amino-acid chain; its full sequence is 2-isopropylmalate synthase (541 aa).

Residues 8-284 enclose the Pyruvate carboxyltransferase domain; the sequence is VIIFDTTLRD…LTNINTRHIY (277 aa). Positions 17, 208, 210, and 244 each coordinate Mn(2+). A regulatory domain region spans residues 408–541; the sequence is RLELVQVSCG…DQPTEVVAGS (134 aa).

It belongs to the alpha-IPM synthase/homocitrate synthase family. LeuA type 1 subfamily. In terms of assembly, homodimer. Mn(2+) is required as a cofactor.

The protein resides in the cytoplasm. It catalyses the reaction 3-methyl-2-oxobutanoate + acetyl-CoA + H2O = (2S)-2-isopropylmalate + CoA + H(+). The protein operates within amino-acid biosynthesis; L-leucine biosynthesis; L-leucine from 3-methyl-2-oxobutanoate: step 1/4. Its function is as follows. Catalyzes the condensation of the acetyl group of acetyl-CoA with 3-methyl-2-oxobutanoate (2-ketoisovalerate) to form 3-carboxy-3-hydroxy-4-methylpentanoate (2-isopropylmalate). This is 2-isopropylmalate synthase from Trichodesmium erythraeum (strain IMS101).